We begin with the raw amino-acid sequence, 487 residues long: Recombining binding protein suppressor of hairless (487 aa).

DNA-binding regions lie at residues Q44–F54 and S152–K157. N6-acetyllysine is present on K162. The segment at R179–T184 is DNA-binding. Residues P342–T432 form the IPT/TIG domain. Residues S452–Y468 are compositionally biased toward polar residues. Positions S452–S487 are disordered. A compositionally biased stretch (low complexity) spans T469–S487.

This sequence belongs to the Su(H) family. In terms of assembly, interacts with activated NOTCH1, NOTCH2 or NOTCH3. Interacts with MINT/SHARP. This interaction may mediate the recruitment of large corepressor complexes containing proteins such as HDAC1, HDAC2, NCOR2, SAP30, FHL1/KYOT2 and CIR1. Interacts with EP300, MAML1 and PTF1A. Interacts with RITA1, leading to nuclear export, prevent the interaction between RBPJ and NICD product and subsequent down-regulation of the Notch signaling pathway. Interacts with SNW1. Interacts with CHCHD2 and CXXC5. Interacts with BEND6 (via BEN domain). Interacts with NKAPL. Interacts with ZMIZ1. Interacts with RBM15. Interacts with L3MBTL3 and KDM1A; the interaction with KDM1A is weaker in the absence of L3MBTL3 and the interaction with L3MBTL3 is impaired by Notch-derived peptides containing the intracellular domain (NICD).

Its subcellular location is the nucleus. The protein resides in the cytoplasm. Transcriptional regulator that plays a central role in Notch signaling, a signaling pathway involved in cell-cell communication that regulates a broad spectrum of cell-fate determinations. Acts as a transcriptional repressor when it is not associated with Notch proteins. When associated with some NICD product of Notch proteins (Notch intracellular domain), it acts as a transcriptional activator that activates transcription of Notch target genes. Probably represses or activates transcription via the recruitment of chromatin remodeling complexes containing histone deacetylase or histone acetylase proteins, respectively. Specifically binds to the immunoglobulin kappa-type J segment recombination signal sequence. Binds specifically to methylated DNA. Binds to the oxygen responsive element of COX4I2 and activates its transcription under hypoxia conditions (4% oxygen). Negatively regulates the phagocyte oxidative burst in response to bacterial infection by repressing transcription of NADPH oxidase subunits. The protein is Recombining binding protein suppressor of hairless (RBPJ) of Bos taurus (Bovine).